A 284-amino-acid chain; its full sequence is Bifunctional protein FolD (284 aa).

Residues 165-167 (GRS), Ser190, and Ile231 contribute to the NADP(+) site.

The protein belongs to the tetrahydrofolate dehydrogenase/cyclohydrolase family. As to quaternary structure, homodimer.

The catalysed reaction is (6R)-5,10-methylene-5,6,7,8-tetrahydrofolate + NADP(+) = (6R)-5,10-methenyltetrahydrofolate + NADPH. It catalyses the reaction (6R)-5,10-methenyltetrahydrofolate + H2O = (6R)-10-formyltetrahydrofolate + H(+). The protein operates within one-carbon metabolism; tetrahydrofolate interconversion. Its function is as follows. Catalyzes the oxidation of 5,10-methylenetetrahydrofolate to 5,10-methenyltetrahydrofolate and then the hydrolysis of 5,10-methenyltetrahydrofolate to 10-formyltetrahydrofolate. This chain is Bifunctional protein FolD, found in Lysinibacillus sphaericus (strain C3-41).